A 1300-amino-acid chain; its full sequence is Insulin receptor-related protein (1300 aa).

An N-terminal signal peptide occupies residues 1 to 26 (MARPKLWPWGILLLVSLLSAGFNLDT). Asn-47 is a glycosylation site (N-linked (GlcNAc...) asparagine). 9 disulfide bridges follow: Cys-214-Cys-222, Cys-216-Cys-228, Cys-229-Cys-237, Cys-233-Cys-246, Cys-249-Cys-258, Cys-262-Cys-274, Cys-280-Cys-300, Cys-304-Cys-317, and Cys-320-Cys-324. Asn-311 carries N-linked (GlcNAc...) asparagine glycosylation. N-linked (GlcNAc...) asparagine glycosylation is found at Asn-411, Asn-492, Asn-528, Asn-616, Asn-634, Asn-756, Asn-885, and Asn-898. 2 Fibronectin type-III domains span residues 483 to 603 (QTRT…TLPA) and 607 to 707 (VPQD…AQEA). Cys-657 and Cys-864 are joined by a disulfide. Residues 740–762 (DAGRHRRAIGSPRPGGNSSDFEI) are disordered. The Extracellular segment spans residues 747-921 (AIGSPRPGGN…PEEEDSGGLH (175 aa)). The Fibronectin type-III 3 domain maps to 818–912 (IPGKLSWEAA…DSVAFYIPGP (95 aa)). Residues 922–943 (ILLTVTPAGLMLLIILAALGFF) traverse the membrane as a helical segment. Topologically, residues 944-1300 (YSRKRNGTLY…CSLQNGGPEH (357 aa)) are cytoplasmic. One can recognise a Protein kinase domain in the interval 979-1254 (ISIIRELGQG…SIQKELRPSF (276 aa)). ATP contacts are provided by residues 985–993 (LGQGSFGMV) and Lys-1013. Asp-1115 acts as the Proton acceptor in catalysis. 2 positions are modified to phosphotyrosine; by autocatalysis: Tyr-1145 and Tyr-1146. Residues 1270-1300 (GLQPTTDAESSSPPTSKGASDCSLQNGGPEH) form a disordered region. Polar residues predominate over residues 1272–1300 (QPTTDAESSSPPTSKGASDCSLQNGGPEH).

The protein belongs to the protein kinase superfamily. Tyr protein kinase family. Insulin receptor subfamily. As to quaternary structure, probable tetramer of 2 alpha and 2 beta chains linked by disulfide bonds. The alpha chains contribute to the formation of the ligand-binding domain, while the beta chains carry the kinase domain. Post-translationally, autophosphorylated on tyrosine residues between pH 7.9 and pH 10.5.

The protein resides in the membrane. The enzyme catalyses L-tyrosyl-[protein] + ATP = O-phospho-L-tyrosyl-[protein] + ADP + H(+). Its function is as follows. Receptor with tyrosine-protein kinase activity. Functions as a pH sensing receptor which is activated by increased extracellular pH. Activates an intracellular signaling pathway that involves IRS1 and AKT1/PKB. The chain is Insulin receptor-related protein (INSRR) from Cavia porcellus (Guinea pig).